Consider the following 194-residue polypeptide: Chorion class B protein ERB4 (194 aa).

The N-terminal stretch at 1 to 20 is a signal peptide; that stretch reads MSSNVIVLCVSALFIQCAVS. The segment at 22 to 72 is left arm; it reads CVGRIGSLRGGPFDGWGYDGLGYDGFGIGGWNGRGCGGLGDDIAAAAALGA. A central domain region spans residues 73–128; the sequence is SHGGTLAVVSTSAAPTGLGIASENVYEGSVGVCGNLPFLGTADVAGEFPTAGLGGI. The segment at 129-194 is right arm (Gly-rich tandem repeats); that stretch reads DYTCGDGAVG…RGCGCGANYY (66 aa).

Belongs to the chorion protein family.

Functionally, this protein is one of many from the eggshell of the silk moth. This Bombyx mori (Silk moth) protein is Chorion class B protein ERB4.